The primary structure comprises 486 residues: Flavin-dependent monooxygenase pboD (486 aa).

FAD is bound by residues Asp-51, Gly-65, and Arg-124. Arg-203 is an active-site residue. FAD contacts are provided by Asp-344 and Gly-357.

It belongs to the paxM FAD-dependent monooxygenase family. FAD serves as cofactor.

Its pathway is secondary metabolite biosynthesis. In terms of biological role, flavin-dependent monooxygenase; part of the gene cluster that mediates the biosynthesis of protubonine B, a hydroxylated and diacetylated cyclo-L-Trp-L-Leu derivative. Within the pathway, pboD catalyzes the hydroxylation at C-3 of the indole ring of cyclo-L-Trp-L-Leu and subsequent formation of the pyrrolidine ring, eading to the production of protubonine D. PboD is also able to accept other cyclodipeptides (CDPs) as substrates, including cyclo-L-Trp-L-Trp, cyclo-L-Trp-L-Tyr, cyclo-L-Trp-L-Phe, cyclo-L-Trp-L-Met, cyclo-L-Trp-L-Ala, cyclo-L-Trp-L-Pro and cyclo-L-Trp-Gly. Assays with cyclo-L-Trp-L-Trp, cyclo-L-Trp-L-Tyr, cyclo-L-Trp-L-Phe show similar or even slightly higher conversion yields, compared with that of the natural substrate cyclo-L-Trp-L-Leu, whereas cyclo-L-Trp-L-Pro and cyclo-L-Trp-Gly are accepted by PboD but only with conversion yields of 10 and 4%, respectively. Cyclo-L-Trp-L-His is not accepted as a substrate. The first step of the protubonine B synthesis is performed by the nonribosomal peptide synthetase pboA that catalyzes the formation of cyclo-L-Trp-L-Leu by condensing L-Leu with L-Trp. The flavin-dependent monooxygenase pboD is responsible for hydroxylation at C-3 of the indole ring and subsequent formation of the pyrrolidine ring, leadind to protubonine D. Protubonine D is further diacetylated by two acetyltransferases, pboB and pboC, to form the final product protubonine B via protubonine C. The chain is Flavin-dependent monooxygenase pboD from Aspergillus ustus.